A 363-amino-acid chain; its full sequence is 3-isopropylmalate dehydrogenase A (363 aa).

Residue 78–89 coordinates NAD(+); that stretch reads GPKWGTGAVRPE. The substrate site is built by Arg-96, Arg-106, Arg-135, and Asp-222. Asp-222, Asp-247, and Asp-251 together coordinate Mg(2+). An NAD(+)-binding site is contributed by 287–299; it reads GSAPDIAGKGIVN.

It belongs to the isocitrate and isopropylmalate dehydrogenases family. Homodimer. Requires Mg(2+) as cofactor. The cofactor is Mn(2+).

The protein resides in the cytoplasm. It catalyses the reaction (2R,3S)-3-isopropylmalate + NAD(+) = 4-methyl-2-oxopentanoate + CO2 + NADH. It participates in amino-acid biosynthesis; L-leucine biosynthesis; L-leucine from 3-methyl-2-oxobutanoate: step 3/4. Functionally, catalyzes the oxidation of 3-carboxy-2-hydroxy-4-methylpentanoate (3-isopropylmalate) to 3-carboxy-4-methyl-2-oxopentanoate. The product decarboxylates to 4-methyl-2 oxopentanoate. The polypeptide is 3-isopropylmalate dehydrogenase A (leu2A) (Aspergillus niger).